The following is a 276-amino-acid chain: Ribonuclease 3 (276 aa).

Residues Met1 to Ser29 form a disordered region. The span at Lys9 to Asp25 shows a compositional bias: basic and acidic residues. Residues His31–Gly157 form the RNase III domain. Glu70 contacts Mg(2+). Asp74 is an active-site residue. Mg(2+)-binding residues include Asp143 and Glu146. Glu146 is an active-site residue. Residues Asp184–Ala252 enclose the DRBM domain. The tract at residues Tyr227 to Ala276 is disordered. Positions Val265–Ala276 are enriched in acidic residues.

It belongs to the ribonuclease III family. Homodimer. Mg(2+) serves as cofactor.

The protein localises to the cytoplasm. It carries out the reaction Endonucleolytic cleavage to 5'-phosphomonoester.. Digests double-stranded RNA. Involved in the processing of primary rRNA transcript to yield the immediate precursors to the large and small rRNAs (23S and 16S). Also processes some mRNAs, and tRNAs when they are encoded in the rRNA operon. May modulate key aspects of gene expression as its absence has extensive effects on the abundance of about 200 different transcripts. Probably processes pre-crRNA and tracrRNA of type II CRISPR loci if present in the organism. In Streptomyces coelicolor (strain ATCC BAA-471 / A3(2) / M145), this protein is Ribonuclease 3 (rnc).